A 126-amino-acid chain; its full sequence is Glycine cleavage system H protein (126 aa).

One can recognise a Lipoyl-binding domain in the interval 24 to 105 (TLTVGITDHA…AYGVWLFKIK (82 aa)). An N6-lipoyllysine modification is found at Lys-65.

Belongs to the GcvH family. As to quaternary structure, the glycine cleavage system is composed of four proteins: P, T, L and H. (R)-lipoate serves as cofactor.

The glycine cleavage system catalyzes the degradation of glycine. The H protein shuttles the methylamine group of glycine from the P protein to the T protein. The chain is Glycine cleavage system H protein from Burkholderia ambifaria (strain MC40-6).